A 382-amino-acid polypeptide reads, in one-letter code: Beta-1,4-galactosyltransferase 6 (382 aa).

The Cytoplasmic portion of the chain corresponds to 1–14; the sequence is MSVLRRMMRVSNRS. A helical; Signal-anchor for type II membrane protein transmembrane segment spans residues 15 to 35; that stretch reads LLAFIFFFSLSSSCLYFIYVA. The Lumenal portion of the chain corresponds to 36-382; sequence PGIANTYLFM…MPELAPIEDY (347 aa). Asn-71, Asn-75, Asn-83, Asn-84, Asn-99, and Asn-122 each carry an N-linked (GlcNAc...) asparagine glycan. A disulfide bridge links Cys-108 with Cys-152. Residues 163–167, 202–204, 229–230, Tyr-258, and Trp-290 contribute to the UDP-alpha-D-galactose site; these read PFRNR, FNR, and VD. Cys-223 and Cys-242 are joined by a disulfide. Residue Asp-230 coordinates Mn(2+). N-acetyl-D-glucosamine is bound at residue 292–295; it reads GEDD. Asn-307 carries an N-linked (GlcNAc...) asparagine glycan. Position 323 (His-323) interacts with Mn(2+). Residue 323 to 324 coordinates UDP-alpha-D-galactose; sequence HH. Arg-334 is a binding site for N-acetyl-D-glucosamine. A glycan (N-linked (GlcNAc...) asparagine) is linked at Asn-367.

Belongs to the glycosyltransferase 7 family. Mn(2+) serves as cofactor. Requires Mg(2+) as cofactor. In terms of tissue distribution, high expression in brain and adrenal gland, lower in liver, lung, colon and peripheral white blood cells.

It is found in the golgi apparatus. Its subcellular location is the golgi stack membrane. It carries out the reaction a beta-D-glucosyl-(1&lt;-&gt;1')-N-acylsphing-4-enine + UDP-alpha-D-galactose = a beta-D-Gal-(1-&gt;4)-beta-D-Glc-(1&lt;-&gt;1)-Cer(d18:1(4E)) + UDP + H(+). It functions in the pathway protein modification; protein glycosylation. Its pathway is sphingolipid metabolism. With respect to regulation, inhibited by EDTA. In terms of biological role, catalyzes the synthesis of lactosylceramide (LacCer) via the transfer of galactose from UDP-galactose to glucosylceramide (GlcCer). LacCer is the starting point in the biosynthesis of all gangliosides (membrane-bound glycosphingolipids) which play pivotal roles in the CNS including neuronal maturation and axonal and myelin formation. In Homo sapiens (Human), this protein is Beta-1,4-galactosyltransferase 6.